The chain runs to 305 residues: Serine/threonine-protein phosphatase PP-X homolog 3 (305 aa).

Positions 53, 55, 81, and 113 each coordinate Mn(2+). Catalysis depends on His-114, which acts as the Proton donor. Mn(2+)-binding residues include His-163 and His-237.

This sequence belongs to the PPP phosphatase family. PP-4 (PP-X) subfamily. Requires Mn(2+) as cofactor.

It catalyses the reaction O-phospho-L-seryl-[protein] + H2O = L-seryl-[protein] + phosphate. The catalysed reaction is O-phospho-L-threonyl-[protein] + H2O = L-threonyl-[protein] + phosphate. The protein is Serine/threonine-protein phosphatase PP-X homolog 3 (Ppx3) of Paramecium tetraurelia.